We begin with the raw amino-acid sequence, 396 residues long: Elongation factor Tu (396 aa).

Residues lysine 10–glutamine 206 enclose the tr-type G domain. The segment at glycine 19 to threonine 26 is G1. GTP is bound at residue glycine 19–threonine 26. Threonine 26 provides a ligand contact to Mg(2+). Residues glycine 60–alanine 64 are G2. The G3 stretch occupies residues aspartate 81–glycine 84. GTP contacts are provided by residues aspartate 81 to histidine 85 and asparagine 136 to aspartate 139. The segment at asparagine 136–aspartate 139 is G4. Residues serine 174–leucine 176 are G5.

This sequence belongs to the TRAFAC class translation factor GTPase superfamily. Classic translation factor GTPase family. EF-Tu/EF-1A subfamily. In terms of assembly, monomer.

The protein localises to the cytoplasm. The catalysed reaction is GTP + H2O = GDP + phosphate + H(+). In terms of biological role, GTP hydrolase that promotes the GTP-dependent binding of aminoacyl-tRNA to the A-site of ribosomes during protein biosynthesis. This is Elongation factor Tu from Anaeromyxobacter dehalogenans (strain 2CP-C).